We begin with the raw amino-acid sequence, 439 residues long: tRNA modification GTPase MnmE (439 aa).

3 residues coordinate (6S)-5-formyl-5,6,7,8-tetrahydrofolate: Arg-23, Glu-80, and Lys-120. One can recognise a TrmE-type G domain in the interval Gly-217–Pro-365. Asn-227 contacts K(+). GTP-binding positions include Asn-227–Ser-232, Thr-246–Thr-252, and Asp-271–Gly-274. Ser-231 is a Mg(2+) binding site. K(+) is bound by residues Thr-246, Val-248, and Thr-251. A Mg(2+)-binding site is contributed by Thr-252. Lys-439 is a (6S)-5-formyl-5,6,7,8-tetrahydrofolate binding site.

The protein belongs to the TRAFAC class TrmE-Era-EngA-EngB-Septin-like GTPase superfamily. TrmE GTPase family. In terms of assembly, homodimer. Heterotetramer of two MnmE and two MnmG subunits. It depends on K(+) as a cofactor.

It is found in the cytoplasm. In terms of biological role, exhibits a very high intrinsic GTPase hydrolysis rate. Involved in the addition of a carboxymethylaminomethyl (cmnm) group at the wobble position (U34) of certain tRNAs, forming tRNA-cmnm(5)s(2)U34. The sequence is that of tRNA modification GTPase MnmE from Rhizobium meliloti (strain 1021) (Ensifer meliloti).